Consider the following 379-residue polypeptide: Chaperone protein DnaJ 2 (379 aa).

A J domain is found at 4 to 68 (DYYAVLGVRR…QKKQVYDLGG (65 aa)). A CR-type zinc finger spans residues 130–212 (GTTKDIQVDT…CAGDGRVPSR (83 aa)). Residues Cys-143, Cys-146, Cys-160, Cys-163, Cys-186, Cys-189, Cys-200, and Cys-203 each contribute to the Zn(2+) site. CXXCXGXG motif repeat units follow at residues 143–150 (CNTCNGEG), 160–167 (CDMCRGRG), 186–193 (CPQCQGFA), and 200–207 (CPECAGDG). The tract at residues 351-379 (RGEERPTGQFQPGQQGLFSRLKDAFNGRS) is disordered. Residues 358–367 (GQFQPGQQGL) show a composition bias toward polar residues. A compositionally biased stretch (basic and acidic residues) spans 370–379 (RLKDAFNGRS).

The protein belongs to the DnaJ family. In terms of assembly, homodimer. Zn(2+) serves as cofactor.

It is found in the cytoplasm. In terms of biological role, participates actively in the response to hyperosmotic and heat shock by preventing the aggregation of stress-denatured proteins and by disaggregating proteins, also in an autonomous, DnaK-independent fashion. Unfolded proteins bind initially to DnaJ; upon interaction with the DnaJ-bound protein, DnaK hydrolyzes its bound ATP, resulting in the formation of a stable complex. GrpE releases ADP from DnaK; ATP binding to DnaK triggers the release of the substrate protein, thus completing the reaction cycle. Several rounds of ATP-dependent interactions between DnaJ, DnaK and GrpE are required for fully efficient folding. Also involved, together with DnaK and GrpE, in the DNA replication of plasmids through activation of initiation proteins. The polypeptide is Chaperone protein DnaJ 2 (Streptomyces albus G).